Consider the following 324-residue polypeptide: tRNA uridine(34) hydroxylase (324 aa).

A Rhodanese domain is found at 145 to 239 (NDKKTIFIDM…YVHDARKNGL (95 aa)). Cysteine 199 (cysteine persulfide intermediate) is an active-site residue.

Belongs to the TrhO family.

It carries out the reaction uridine(34) in tRNA + AH2 + O2 = 5-hydroxyuridine(34) in tRNA + A + H2O. Its function is as follows. Catalyzes oxygen-dependent 5-hydroxyuridine (ho5U) modification at position 34 in tRNAs. The sequence is that of tRNA uridine(34) hydroxylase from Buchnera aphidicola subsp. Acyrthosiphon pisum (strain Tuc7).